We begin with the raw amino-acid sequence, 226 residues long: Ribose-5-phosphate isomerase A (226 aa).

Residues 25–28 (TGST), 81–84 (DGAD), and 94–97 (KGGG) each bind substrate. Glu103 serves as the catalytic Proton acceptor. Lys121 is a binding site for substrate.

Belongs to the ribose 5-phosphate isomerase family. Homodimer.

The catalysed reaction is aldehydo-D-ribose 5-phosphate = D-ribulose 5-phosphate. The protein operates within carbohydrate degradation; pentose phosphate pathway; D-ribose 5-phosphate from D-ribulose 5-phosphate (non-oxidative stage): step 1/1. Its function is as follows. Catalyzes the reversible conversion of ribose-5-phosphate to ribulose 5-phosphate. The sequence is that of Ribose-5-phosphate isomerase A from Enterococcus faecalis (strain ATCC 700802 / V583).